The primary structure comprises 566 residues: Membrane protein insertase YidC (566 aa).

The next 5 membrane-spanning stretches (helical) occupy residues 3-23 (IKRI…FNAW), 346-366 (GWLW…HAVV), 369-389 (WGWS…WFSA), 436-456 (GGCL…YVII), and 509-529 (MWIL…GLVL).

The protein belongs to the OXA1/ALB3/YidC family. Type 1 subfamily. As to quaternary structure, interacts with the Sec translocase complex via SecD. Specifically interacts with transmembrane segments of nascent integral membrane proteins during membrane integration.

It is found in the cell inner membrane. Its function is as follows. Required for the insertion and/or proper folding and/or complex formation of integral membrane proteins into the membrane. Involved in integration of membrane proteins that insert both dependently and independently of the Sec translocase complex, as well as at least some lipoproteins. Aids folding of multispanning membrane proteins. This is Membrane protein insertase YidC from Coxiella burnetii (strain CbuK_Q154) (Coxiella burnetii (strain Q154)).